A 479-amino-acid polypeptide reads, in one-letter code: Sucrose-6-phosphate hydrolase (479 aa).

Residues 1–28 are disordered; that stretch reads MTAHDQELRRRAYEEVEKKEPIANSDPH. Residues 40–43, Gln59, 102–103, 161–162, and Glu220 contribute to the substrate site; these read LLND, YS, and RD. Asp43 is an active-site residue.

Belongs to the glycosyl hydrolase 32 family.

The enzyme catalyses Hydrolysis of terminal non-reducing beta-D-fructofuranoside residues in beta-D-fructofuranosides.. It functions in the pathway glycan biosynthesis; sucrose metabolism. In Bacillus subtilis (strain 168), this protein is Sucrose-6-phosphate hydrolase (sacA).